A 144-amino-acid polypeptide reads, in one-letter code: Oleosin H2 (144 aa).

Residue Ala-2 is modified to N-acetylalanine. The next 3 membrane-spanning stretches (helical) occupy residues 28–48 (VLAV…AGLI), 53–73 (IIGL…LVPA), and 75–95 (LTIA…ITAL). The Proline-knot signature appears at 61 to 72 (PLFVIFSPILVP). Residues 124-144 (QETVGQKTREAGQRSQDVIRP) are disordered.

It belongs to the oleosin family. Expressed in seeds (at protein level).

The protein resides in the lipid droplet. It localises to the membrane. In terms of biological role, may have a structural role to stabilize the lipid body during desiccation of the seed by preventing coalescence of the oil. Probably interacts with both lipid and phospholipid moieties of lipid bodies. May also provide recognition signals for specific lipase anchorage in lipolysis during seedling growth. This Sesamum indicum (Oriental sesame) protein is Oleosin H2.